Reading from the N-terminus, the 654-residue chain is Fructose-1,6-bisphosphatase class 3 (654 aa).

Residues 288 to 307 (NPAFKPKKRPDKHERLTQRE) are disordered. Over residues 298–307 (DKHERLTQRE) the composition is skewed to basic and acidic residues.

Belongs to the FBPase class 3 family. The cofactor is Mn(2+).

It carries out the reaction beta-D-fructose 1,6-bisphosphate + H2O = beta-D-fructose 6-phosphate + phosphate. The protein operates within carbohydrate biosynthesis; gluconeogenesis. The chain is Fructose-1,6-bisphosphatase class 3 from Staphylococcus aureus (strain Mu3 / ATCC 700698).